The following is a 192-amino-acid chain: 21.7 kDa class VI heat shock protein (192 aa).

In terms of domain architecture, sHSP spans 80 to 192 (SLRSLGQCRV…IPKINSKNKF (113 aa)).

This sequence belongs to the small heat shock protein (HSP20) family. As to quaternary structure, may form oligomeric structures.

Its subcellular location is the cytoplasm. This chain is 21.7 kDa class VI heat shock protein (HSP21.7), found in Arabidopsis thaliana (Mouse-ear cress).